The primary structure comprises 229 residues: DNA repair protein RecO (229 aa).

Belongs to the RecO family.

Functionally, involved in DNA repair and RecF pathway recombination. The chain is DNA repair protein RecO from Pseudomonas fluorescens (strain ATCC BAA-477 / NRRL B-23932 / Pf-5).